The sequence spans 381 residues: Protein-glutamate methylesterase/protein-glutamine glutaminase (381 aa).

Residues 8–125 (QVLCIDDSAL…RDGMNEYADQ (118 aa)) enclose the Response regulatory domain. D59 is subject to 4-aspartylphosphate. The region spanning 183–375 (FSSTEKLIIV…PHVLARLSAH (193 aa)) is the CheB-type methylesterase domain. Active-site residues include S195, H221, and D317.

Belongs to the CheB family. In terms of processing, phosphorylated by CheA. Phosphorylation of the N-terminal regulatory domain activates the methylesterase activity.

It localises to the cytoplasm. The enzyme catalyses [protein]-L-glutamate 5-O-methyl ester + H2O = L-glutamyl-[protein] + methanol + H(+). The catalysed reaction is L-glutaminyl-[protein] + H2O = L-glutamyl-[protein] + NH4(+). In terms of biological role, involved in chemotaxis. Part of a chemotaxis signal transduction system that modulates chemotaxis in response to various stimuli. Catalyzes the demethylation of specific methylglutamate residues introduced into the chemoreceptors (methyl-accepting chemotaxis proteins or MCP) by CheR. Also mediates the irreversible deamidation of specific glutamine residues to glutamic acid. This Ralstonia nicotianae (strain ATCC BAA-1114 / GMI1000) (Ralstonia solanacearum) protein is Protein-glutamate methylesterase/protein-glutamine glutaminase.